An 807-amino-acid polypeptide reads, in one-letter code: Spondin-1 (807 aa).

A signal peptide spans 1 to 28 (MRLSPVSLRLSRGPALLALALPLAAALA). One can recognise a Reelin domain in the interval 29–194 (FSDETLDKVT…DPTLDGVTDR (166 aa)). Intrachain disulfides connect Cys44–Cys128, Cys156–Cys182, Cys199–Cys336, Cys200–Cys340, Cys202–Cys415, Cys443–Cys480, Cys454–Cys489, Cys459–Cys494, Cys502–Cys538, Cys513–Cys517, Cys548–Cys554, Cys559–Cys595, Cys570–Cys574, Cys605–Cys610, Cys615–Cys650, Cys626–Cys630, and Cys660–Cys665. Residues 195–388 (PILDCCACGT…LTSLDHPQSP (194 aa)) form the Spondin domain. N-linked (GlcNAc...) asparagine glycosylation is present at Asn214. 3 residues coordinate Ca(2+): Asp325, Asp354, and Asp358. TSP type-1 domains are found at residues 442–495 (TCIY…PGCS), 501–555 (TCTM…EECS), 558–611 (SCLV…PECH), 614–666 (PCLL…PECP), and 668–721 (DCEL…RKCL). N-linked (GlcNAc...) asparagine glycosylation occurs at Asn681. Residues 732-746 (REARESRRSEQLREE) show a composition bias toward basic and acidic residues. Residues 732 to 752 (REARESRRSEQLREESDGEQF) are disordered. Residues 754–806 (GCRMRPWTAWSECTKLCGGGIQERYMTVKKRFKSSQFTSCKDKKEIRACNVHP) enclose the TSP type-1 6 domain.

Binds to the central extracellular domain of APP and inhibits beta-secretase cleavage of APP.

It is found in the secreted. The protein localises to the extracellular space. It localises to the extracellular matrix. Its function is as follows. Cell adhesion protein that promotes the attachment of spinal cord and sensory neuron cells and the outgrowth of neurites in vitro. May contribute to the growth and guidance of axons in both the spinal cord and the PNS. This is Spondin-1 (Spon1) from Mus musculus (Mouse).